The chain runs to 359 residues: MPAHLLQEEISSSYTTTTTITAPPSKVLQNGGGKLEKTPLYLEEDIRPEMRDDIYDPTYQDKEGPKPKLEYVWRNIILMGLLHLGALYGITLIPTCKIYTFLWVLFYYMMSALGITAGVHRLWSHRTYKARLPLRVFLIIANTMAFQNDVFEWSRDHRAHHKFSETDADPHNSRRGFFFSHVGWLLVRKHPAVREKGATLDLSDLRAEKLVMFQRRYYKPGVLLLCFILPTLVPWYLWGETFQNSLFFATLLRYAVVLNATWLVNSAAHMYGYRPYDKTINPRENILVSLGAVGEGFHNYHHTFPYDYSASEYRWHINFTTFFIDCMAAIGLAYDRKKVSKAAALARMKRTGEESCKSG.

The Cytoplasmic portion of the chain corresponds to 1–72 (MPAHLLQEEI…EGPKPKLEYV (72 aa)). A helical transmembrane segment spans residues 73–93 (WRNIILMGLLHLGALYGITLI). Asparagine 75 lines the substrate pocket. Residues 94-97 (PTCK) are Lumenal-facing. Residues 98-118 (IYTFLWVLFYYMMSALGITAG) form a helical membrane-spanning segment. At 119 to 217 (VHRLWSHRTY…EKLVMFQRRY (99 aa)) the chain is on the cytoplasmic side. Fe cation is bound by residues histidine 120 and histidine 125. The Histidine box-1 signature appears at 120–125 (HRLWSH). Asparagine 148, arginine 155, and aspartate 156 together coordinate substrate. The Fe cation site is built by histidine 157, histidine 160, and histidine 161. Residues 157–161 (HRAHH) carry the Histidine box-2 motif. Substrate-binding residues include arginine 188 and lysine 189. The residue at position 203 (serine 203) is a Phosphoserine. Residues 218–237 (YKPGVLLLCFILPTLVPWYL) traverse the membrane as a helical segment. At 238 to 241 (WGET) the chain is on the lumenal side. A helical transmembrane segment spans residues 242–263 (FQNSLFFATLLRYAVVLNATWL). Residue tryptophan 262 participates in substrate binding. Residues 264-359 (VNSAAHMYGY…RTGEESCKSG (96 aa)) are Cytoplasmic-facing. Fe cation is bound by residues histidine 269, histidine 298, histidine 301, and histidine 302. Residues 298–302 (HNYHH) carry the Histidine box-3 motif.

Belongs to the fatty acid desaturase type 1 family. It depends on Fe(2+) as a cofactor.

Its subcellular location is the endoplasmic reticulum membrane. It catalyses the reaction octadecanoyl-CoA + 2 Fe(II)-[cytochrome b5] + O2 + 2 H(+) = (9Z)-octadecenoyl-CoA + 2 Fe(III)-[cytochrome b5] + 2 H2O. The enzyme catalyses hexadecanoyl-CoA + 2 Fe(II)-[cytochrome b5] + O2 + 2 H(+) = (9Z)-hexadecenoyl-CoA + 2 Fe(III)-[cytochrome b5] + 2 H2O. Its function is as follows. Stearoyl-CoA desaturase that utilizes O(2) and electrons from reduced cytochrome b5 to introduce the first double bond into saturated fatty acyl-CoA substrates. Catalyzes the insertion of a cis double bond at the delta-9 position into fatty acyl-CoA substrates including palmitoyl-CoA and stearoyl-CoA. Gives rise to a mixture of 16:1 and 18:1 unsaturated fatty acids. Plays an important role in lipid biosynthesis. Plays an important role in regulating the expression of genes that are involved in lipogenesis and in regulating mitochondrial fatty acid oxidation. Plays an important role in body energy homeostasis. Contributes to the biosynthesis of membrane phospholipids, cholesterol esters and triglycerides. This chain is Stearoyl-CoA desaturase (SCD), found in Capra hircus (Goat).